Here is a 705-residue protein sequence, read N- to C-terminus: uncharacterized protein (705 aa).

Positions 24 to 52 (CHFCRVRKLKCDRVRPFCGSCSSRNRKQC) form a DNA-binding region, zn(2)-C6 fungal-type.

It localises to the nucleus. This is an uncharacterized protein from Saccharomyces cerevisiae (strain ATCC 204508 / S288c) (Baker's yeast).